The following is a 299-amino-acid chain: Taste receptor type 2 member 4 (299 aa).

Residues 1-9 (MLRLFYFSA) are Extracellular-facing. Residues 10–30 (IIASVILNFVGIIMNLFITVV) form a helical membrane-spanning segment. Residues 31 to 46 (NCKTWVKSHRISSSDR) are Cytoplasmic-facing. A helical membrane pass occupies residues 47–67 (ILFSLGITRFLMLGLFLVNTI). The Extracellular segment spans residues 68–81 (YFVSSNXERSVYLS). The helical transmembrane segment at 82 to 102 (AFFVLCFMFLDSSSLWFVTLL) threads the bilayer. Topologically, residues 103-131 (NILYCVKITNFQHSVFLLLKRNISPKIPR) are cytoplasmic. Residues 132–152 (LLLACVLISAFTTCLYITLSQ) form a helical membrane-spanning segment. The Extracellular segment spans residues 153 to 172 (ASPFPELVTTRNNTSFNINE). N-linked (GlcNAc...) asparagine glycosylation is found at asparagine 164 and asparagine 165. Residues 173-193 (GILSLVVSLVLSSSLQFIINV) traverse the membrane as a helical segment. Residues 194 to 230 (TSASLLIHSLRRHIQKMQKNATGFWNPQTEAHVGAMK) are Cytoplasmic-facing. A helical membrane pass occupies residues 231–251 (LMVYFLILYIPYSVATLVQYL). At 252 to 262 (PFYAGMDMGTK) the chain is on the extracellular side. Residues 263–283 (SICLIFATLYSPGHSVLIIIT) traverse the membrane as a helical segment. The Cytoplasmic segment spans residues 284-299 (HPKLKTTAKKILCFKK).

It belongs to the G-protein coupled receptor T2R family.

It is found in the membrane. Its subcellular location is the cell projection. The protein resides in the cilium membrane. Functionally, gustducin-coupled receptor implicated in the perception of bitter compounds in the oral cavity and the gastrointestinal tract. Signals through PLCB2 and the calcium-regulated cation channel TRPM5. In airway epithelial cells, binding of denatonium increases the intracellular calcium ion concentration and stimulates ciliary beat frequency. The protein is Taste receptor type 2 member 4 (TAS2R4) of Pan troglodytes (Chimpanzee).